Here is a 467-residue protein sequence, read N- to C-terminus: Prenyltransferase GME11375 (467 aa).

Residue glutamate 93 coordinates L-tryptophan. The dimethylallyl diphosphate site is built by arginine 108, lysine 196, tyrosine 198, lysine 266, tyrosine 268, and tyrosine 436.

It belongs to the tryptophan dimethylallyltransferase family.

The protein operates within secondary metabolite biosynthesis. Prenyltransferase; part of the gene cluster that mediates the biosynthesis of dibenzodioxocinones such as pestalotiollide B, a novel class of inhibitors against cholesterol ester transfer protein (CEPT). The biosynthesis initiates from condensation of acetate and malonate units catalyzed by the non-reducing PKS pks8/GME11356. Pks8/GME11356 lacks a thioesterase (TE) domain, which is important to the cyclizing of the third ring of atrochrysone carboxylic acid, and the esterase GME11355 might play the role of TE and catalyzes the cyclization reaction of the C ring. The lactamase-like protein GME11357 (or other beta-lactamases in Pestalotiopsis microspora) probably hydrolyzes the thioester bond between the ACP of pks8/GME11356 and the intermediate to release atrochrysone carboxylic acid, which is spontaneously dehydrates to form endocrocin anthrone. Endocrocin anthrone is further converted to emodin via the endocrocin intermediate. Emodin is then oxidized by several enzymes such as the Baeyer-Villiger oxidase GME11358, the oxidoreductase GME11367, the short chain dehydrogenase/reductase GME11373, as well as by other oxidoreductases from the cluster, to modify the A and C rings and open the B ring, and finally yield monodictyphenone. The prenyltransferase GME11375 may catalyze the addition reaction between the C5 side chains and the carbon bone of dibenzodioxocinones. The remaining biochemical reactions to the final product dibenzodioxocinones should be methylation catalyzed by methyltransferase GME11366 and reduction and lactonization reaction catalyzed by a series of oxidordeuctases. The protein is Prenyltransferase GME11375 of Pestalotiopsis microspora.